A 217-amino-acid chain; its full sequence is NADPH-dependent 3-demethoxyubiquinone 3-hydroxylase, mitochondrial (217 aa).

The transit peptide at 1–34 (MSCARALAACCLWRLRTGALQPLSAYGRRISVRF) directs the protein to the mitochondrion. 2 repeat units span residues 48 to 129 (AVDR…TALL) and 130 to 217 (GKEG…SERL). Residues 48-217 (AVDRIIRVDH…KVAIYLSERL (170 aa)) form a 2 X approximate tandem repeats region. Arg-51 contacts NADH. Residues Glu-60, Glu-90, His-93, Glu-142, Glu-178, and His-181 each coordinate Fe cation. NADH contacts are provided by Lys-208, Tyr-212, and Arg-216.

It belongs to the COQ7 family. In terms of assembly, component of a multi-subunit COQ enzyme complex. Interacts with COQ8B and COQ6. Interacts with COQ9. It depends on Fe cation as a cofactor.

It localises to the mitochondrion inner membrane. It carries out the reaction a 5-methoxy-2-methyl-3-(all-trans-polyprenyl)benzoquinone + NADH + O2 = a 3-demethylubiquinone + NAD(+) + H2O. Its pathway is cofactor biosynthesis; ubiquinone biosynthesis. In terms of biological role, catalyzes the hydroxylation of the 5-methoxy-2-methyl-3-(all-trans-polyprenyl)benzoquinone at the C6 position and participates in the biosynthesis of ubiquinone. Catalyzes the reaction through a substrate-mediated reduction pathway, whereby NADH shuttles electrons to 5-methoxy-2-methyl-3-(all-trans-decaprenyl)benzoquinone, which then transfers the electrons to the two Fe(3+) centers. The binding of 5-methoxy-2-methyl-3-(all-trans-polyprenyl)benzoquinone (DMQn) mediates reduction of the diiron center by nicotinamide adenine dinucleotide (NADH) and initiates oxygen activation for subsequent DMQ hydroxylation. The physiological substrates are 5-methoxy-2-methyl-3-(all-trans-nonaprenyl)benzoquinone (DMQ(9)) and 5-methoxy-2-methyl-3-(all-trans-decaprenyl)benzoquinone (DMQ(10)), however in vitro the enzyme does not have any specificity concerning the length of the polyprenyl tail, and accepts tails of various lengths with similar efficiency. Also has a structural role in the COQ enzyme complex, stabilizing other COQ polypeptides. Involved in lifespan determination in a ubiquinone-independent manner. Plays a role in modulating mitochondrial stress responses, acting in the nucleus, perhaps via regulating gene expression, independent of its characterized mitochondrial function in ubiquinone biosynthesis. The polypeptide is NADPH-dependent 3-demethoxyubiquinone 3-hydroxylase, mitochondrial (Bos taurus (Bovine)).